Reading from the N-terminus, the 212-residue chain is Eukaryotic translation initiation factor 4E-1 (212 aa).

Cys-125 and Cys-129 are joined by a disulfide.

Belongs to the eukaryotic initiation factor 4E family. EIF4F is a multi-subunit complex, the composition of which varies with external and internal environmental conditions. It is composed of at least EIF4A, EIF4E and EIF4G. EIF4E is also known to interact with other partners, including pgl-1. Interacts with ifet-1. As to expression, enriched in the germline from L3 larvae to adults; regions of the gonad undergoing spermatogenesis. Expressed in germ granules (P granules); when associated with pgl-1.

It is found in the cytoplasm. Functionally, recognizes and binds the 7-methylguanosine-containing mRNA cap during an early step in the initiation of protein synthesis and facilitates ribosome binding by inducing the unwinding of the mRNAs secondary structures. All 5 eIF4E proteins bind monomethyl cap structures. Only ife-1, ife-2 and ife-5 bind trimethyl cap structures which result from trans-splicing. Translation of trimethyl cap structure mRNAs may be regulated by intracellular redox state; disulfide bonds change the width and depth of the cap-binding cavity determining selectivity to mRNA caps. Required for progression through meiotic divisions during spermatogenesis and for the production of viable sperm. It is not required during oogenesis. This is Eukaryotic translation initiation factor 4E-1 (ife-1) from Caenorhabditis elegans.